Here is a 375-residue protein sequence, read N- to C-terminus: Alcohol dehydrogenase B (375 aa).

Residues Cys40, His62, Cys92, Cys95, Cys98, Cys106, and Cys169 each coordinate Zn(2+).

The protein belongs to the zinc-containing alcohol dehydrogenase family. It depends on Zn(2+) as a cofactor.

Its subcellular location is the cytoplasm. It catalyses the reaction a primary alcohol + NAD(+) = an aldehyde + NADH + H(+). It carries out the reaction a secondary alcohol + NAD(+) = a ketone + NADH + H(+). This Mycobacterium bovis (strain ATCC BAA-935 / AF2122/97) protein is Alcohol dehydrogenase B (adhB).